A 256-amino-acid polypeptide reads, in one-letter code: DNA repair protein RecO (256 aa).

The protein belongs to the RecO family.

Its function is as follows. Involved in DNA repair and RecF pathway recombination. This is DNA repair protein RecO from Clostridium novyi (strain NT).